The sequence spans 281 residues: Putative phosphatase/phosphodiesterase MG246 (281 aa).

Fe cation contacts are provided by aspartate 11, glutamate 42, asparagine 43, and asparagine 70. Residue histidine 71 is the Proton donor of the active site. Histidine 157, histidine 182, and histidine 184 together coordinate Fe cation.

Belongs to the YmdB-like family. It depends on Fe(3+) as a cofactor.

The polypeptide is Putative phosphatase/phosphodiesterase MG246 (Mycoplasma genitalium (strain ATCC 33530 / DSM 19775 / NCTC 10195 / G37) (Mycoplasmoides genitalium)).